The sequence spans 286 residues: Small ribosomal subunit protein uS2 (286 aa).

The segment at 213-286 (EEQAQNNKWA…GAQEGGEWGS (74 aa)) is disordered. Residues 227–241 (SPALSAAVPSSAAPV) show a composition bias toward low complexity. The segment covering 244–270 (WSSSPSKETTEWGASNTAAAAKSSWSN) has biased composition (polar residues). The segment covering 274–286 (GEWGAQEGGEWGS) has biased composition (gly residues).

This sequence belongs to the universal ribosomal protein uS2 family. As to quaternary structure, component of the small ribosomal subunit. Mature ribosomes consist of a small (40S) and a large (60S) subunit. The 40S subunit contains about 33 different proteins and 1 molecule of RNA (18S). The 60S subunit contains about 49 different proteins and 3 molecules of RNA (28S, 5.8S and 5S). Interacts with ribosomal protein S21.

It is found in the cytoplasm. In terms of biological role, required for the assembly and/or stability of the 40S ribosomal subunit. Required for the processing of the 20S rRNA-precursor to mature 18S rRNA in a late step of the maturation of 40S ribosomal subunits. This is Small ribosomal subunit protein uS2 from Trichoplax adhaerens (Trichoplax reptans).